The primary structure comprises 232 residues: Chaperone protein CssC (232 aa).

Positions 1–20 (MKSKLIILLTLVPFSSFSTG) are cleaved as a signal peptide.

Belongs to the periplasmic pilus chaperone family.

The protein localises to the periplasm. Its function is as follows. Involved in the biogenesis of the CS6 fimbria. This Escherichia coli protein is Chaperone protein CssC (cssC).